Reading from the N-terminus, the 265-residue chain is uncharacterized protein (265 aa).

The interval 233–265 is disordered; that stretch reads STACGSDQRPTRLPRASCSSRSISGSAARPWKR. Residues 247–265 are compositionally biased toward low complexity; it reads RASCSSRSISGSAARPWKR.

This is an uncharacterized protein from Escherichia coli.